The primary structure comprises 498 residues: MDVPARVSRRAAAAAARMLLRTARVPRECWFLPTALLCAYGFFANLRPSEPFLTPYLLGPDKNLTERQVYNEIYPVWTYSYLLLLFPVFLATDYLRYKPVILLQGLSLIVTWFMLLYAQGLLAIQFLEFFYGIATATEIAYYSYIYTVVDLGMYQKVTSYCRSATLVGFTVGSVLGQILVSVVGWSLFSLNVISLTCVSVAFAVAWFLPMPQKSLFFHHIPSSCHGVNGLKVQNGGIVTDTPAANHLPGWEDIESKIPLNLDEPPVEEPEEPKPDRLRVFRVLWNDFLMCYSSRPLLCWSVWWALSTCGYFQVVNYAQGLWEKVMPSQNADIYNGGVEAVSTLLGASAVFAVGYIKLSWSTWGEMTLFLCSLLIAAAVYVMDTVQSIWVCYASYVVFRIIYMVLITIATFQIAANLSMERYALVFGVNTFIALALQTLLTLIVVDARGLGLCITTQFLIYASYFAAISVVFLANGIVSIIKKCRKQEDPSSSPQASTS.

Position 1 is an N-acetylmethionine (methionine 1). Residues 1-28 (MDVPARVSRRAAAAAARMLLRTARVPRE) lie on the Cytoplasmic side of the membrane. A helical transmembrane segment spans residues 29–46 (CWFLPTALLCAYGFFANL). The Extracellular segment spans residues 47–71 (RPSEPFLTPYLLGPDKNLTERQVYN). N-linked (GlcNAc...) asparagine glycosylation is present at asparagine 63. A helical membrane pass occupies residues 72-92 (EIYPVWTYSYLLLLFPVFLAT). The Cytoplasmic portion of the chain corresponds to 93–105 (DYLRYKPVILLQG). A helical membrane pass occupies residues 106–126 (LSLIVTWFMLLYAQGLLAIQF). Residues 127–128 (LE) are Extracellular-facing. The chain crosses the membrane as a helical span at residues 129 to 149 (FFYGIATATEIAYYSYIYTVV). Over 150 to 164 (DLGMYQKVTSYCRSA) the chain is Cytoplasmic. The helical transmembrane segment at 165–185 (TLVGFTVGSVLGQILVSVVGW) threads the bilayer. Residue serine 186 is a topological domain, extracellular. A helical membrane pass occupies residues 187–207 (LFSLNVISLTCVSVAFAVAWF). At 208-295 (LPMPQKSLFF…DFLMCYSSRP (88 aa)) the chain is on the cytoplasmic side. Residue serine 222 is modified to Phosphoserine. The chain crosses the membrane as a helical span at residues 296–316 (LLCWSVWWALSTCGYFQVVNY). At 317–334 (AQGLWEKVMPSQNADIYN) the chain is on the extracellular side. Residues 335 to 355 (GGVEAVSTLLGASAVFAVGYI) form a helical membrane-spanning segment. The Cytoplasmic portion of the chain corresponds to 356-360 (KLSWS). A helical transmembrane segment spans residues 361-381 (TWGEMTLFLCSLLIAAAVYVM). Residues 382–386 (DTVQS) are Extracellular-facing. A helical membrane pass occupies residues 387-407 (IWVCYASYVVFRIIYMVLITI). Topologically, residues 408–423 (ATFQIAANLSMERYAL) are cytoplasmic. The chain crosses the membrane as a helical span at residues 424–444 (VFGVNTFIALALQTLLTLIVV). Residues 445-456 (DARGLGLCITTQ) lie on the Extracellular side of the membrane. Residues 457–477 (FLIYASYFAAISVVFLANGIV) form a helical membrane-spanning segment. The Cytoplasmic portion of the chain corresponds to 478-498 (SIIKKCRKQEDPSSSPQASTS).

The protein belongs to the reduced folate carrier (RFC) transporter (TC 2.A.48) family. Interacts with TSPAN1; this interaction increases the stability of SLC19A2. Interacts with TMEM63B. Expressed in liver. Expressed in cochlear hair cells and duodenum (at protein level). Detected in pancreatic acinar cells (at protein level). Also expressed strongly in pancreatic islet cells. Expressed in the testis. As to expression, very highly expressed in liver, and also detected at lower levels in heart, testis, kidney, brain and spleen. In terms of tissue distribution, expressed at low levels in liver and spleen.

Its subcellular location is the cell membrane. The enzyme catalyses thiamine(out) + H(+)(in) = thiamine(in) + H(+)(out). It carries out the reaction pyridoxine(out) + n H(+)(out) = pyridoxine(in) + n H(+)(in). In terms of biological role, high-affinity transporter for the intake of thiamine. Essential for spermatogenesis. Mediates H(+)-dependent pyridoxine transport. This is Thiamine transporter 1 from Mus musculus (Mouse).